The sequence spans 1605 residues: Sister chromatid cohesion protein PDS5 homolog A (1605 aa).

14 HEAT repeats span residues 50–89, 96–136, 146–183, 184–221, 261–298, 302–339, 341–378, 380–416, 552–591, 644–681, 723–758, 821–860, 961–1000, and 1050–1088; these read KSIQ…ITAP, NIMK…YRSC, DLVK…EESE, DVQE…HCAP, QALS…LPGR, EEFD…SDPL, AEAS…SALT, IPVD…VYCL, ANIW…LYDF, SLFD…TIRE, KSLS…IAMP, AGVD…AAKA, LYPH…QLYL, and HAIC…KPSE. 2 disordered regions span residues 1155–1182 and 1203–1262; these read LRAQ…KNDV and ESSN…PKVQ. Positions 1211-1225 are enriched in basic and acidic residues; it reads SPSERAEICQRDQKG. A Nuclear localization signal 1 motif is present at residues 1226–1233; that stretch reads NKRNVGDA. Ser-1274 carries the phosphoserine modification. The span at 1279-1295 shows a compositional bias: basic and acidic residues; the sequence is NVSLDSHDENSDQEKML. 3 disordered regions span residues 1279 to 1307, 1324 to 1353, and 1423 to 1605; these read NVSL…KKSL, ERSR…SGLA, and GKTA…RTAI. The residue at position 1299 (Ser-1299) is a Phosphoserine. Composition is skewed to basic residues over residues 1425–1442 and 1464–1476; these read TAKK…KRSS and KGKR…LKQL. The Nuclear localization signal 2 signature appears at 1426-1433; that stretch reads AKKSRTSK. 3 stretches are compositionally biased toward basic and acidic residues: residues 1477–1495, 1514–1527, and 1534–1574; these read HPKD…VESR, GEEK…SLKE, and VVNK…NEME. Residues Ser-1524, Ser-1562, and Ser-1584 each carry the phosphoserine modification. A compositionally biased stretch (acidic residues) spans 1575–1585; the sequence is REAEENAETSD. Thr-1588 carries the post-translational modification Phosphothreonine.

It belongs to the PDS5 family. In terms of assembly, interacts with the cohesin complex. Interacts with DEK3.

It localises to the nucleus. In terms of biological role, cohesin cofactor dispensable during the meiotic division but playing an important role in DNA repair by homologous recombination (HR) probably by helping SMC5/SMC6 complex. Regulator of sister chromatid cohesion in mitosis which may stabilize cohesin complex association with chromatin. May couple sister chromatid cohesion during mitosis to DNA replication. Cohesion ensures that chromosome partitioning is accurate in both meiotic and mitotic cells and plays an important role in DNA repair. This is Sister chromatid cohesion protein PDS5 homolog A from Arabidopsis thaliana (Mouse-ear cress).